A 233-amino-acid polypeptide reads, in one-letter code: Purine nucleoside phosphorylase DeoD-type (233 aa).

H4 is an a purine D-ribonucleoside binding site. Residues G20, R24, R43, and 87-90 (RVGT) contribute to the phosphate site. A purine D-ribonucleoside-binding positions include E162, 179-181 (EME), and 203-204 (SD). D204 (proton donor) is an active-site residue.

This sequence belongs to the PNP/UDP phosphorylase family. As to quaternary structure, homohexamer; trimer of homodimers.

The catalysed reaction is a purine D-ribonucleoside + phosphate = a purine nucleobase + alpha-D-ribose 1-phosphate. It catalyses the reaction a purine 2'-deoxy-D-ribonucleoside + phosphate = a purine nucleobase + 2-deoxy-alpha-D-ribose 1-phosphate. In terms of biological role, catalyzes the reversible phosphorolytic breakdown of the N-glycosidic bond in the beta-(deoxy)ribonucleoside molecules, with the formation of the corresponding free purine bases and pentose-1-phosphate. This Alkaliphilus metalliredigens (strain QYMF) protein is Purine nucleoside phosphorylase DeoD-type.